The following is a 712-amino-acid chain: Auxin response factor 15 (712 aa).

Residues 142-244 constitute a DNA-binding region (TF-B3); that stretch reads FCKTLTASDT…ELRLGVRRAA (103 aa).

Belongs to the ARF family. In terms of assembly, homo and heterodimers. Expressed in roots, culms, leaves and young panicles.

The protein localises to the nucleus. Auxin response factors (ARFs) are transcriptional factors that bind specifically to the DNA sequence 5'-TGTCTC-3' found in the auxin-responsive promoter elements (AuxREs). This is Auxin response factor 15 (ARF15) from Oryza sativa subsp. japonica (Rice).